The primary structure comprises 357 residues: Fructose-bisphosphate aldolase, cytoplasmic isozyme (357 aa).

Substrate-binding residues include arginine 53 and lysine 142. Glutamate 183 (proton acceptor) is an active-site residue. Catalysis depends on lysine 225, which acts as the Schiff-base intermediate with dihydroxyacetone-P.

It belongs to the class I fructose-bisphosphate aldolase family.

It localises to the cytoplasm. The enzyme catalyses beta-D-fructose 1,6-bisphosphate = D-glyceraldehyde 3-phosphate + dihydroxyacetone phosphate. It functions in the pathway carbohydrate degradation; glycolysis; D-glyceraldehyde 3-phosphate and glycerone phosphate from D-glucose: step 4/4. The polypeptide is Fructose-bisphosphate aldolase, cytoplasmic isozyme (Spinacia oleracea (Spinach)).